We begin with the raw amino-acid sequence, 434 residues long: Serine hydroxymethyltransferase (434 aa).

(6S)-5,6,7,8-tetrahydrofolate contacts are provided by residues Leu-133 and 137 to 139 (GHL). Lys-242 is subject to N6-(pyridoxal phosphate)lysine.

Belongs to the SHMT family. As to quaternary structure, homodimer. It depends on pyridoxal 5'-phosphate as a cofactor.

Its subcellular location is the cytoplasm. It carries out the reaction (6R)-5,10-methylene-5,6,7,8-tetrahydrofolate + glycine + H2O = (6S)-5,6,7,8-tetrahydrofolate + L-serine. It participates in one-carbon metabolism; tetrahydrofolate interconversion. The protein operates within amino-acid biosynthesis; glycine biosynthesis; glycine from L-serine: step 1/1. Functionally, catalyzes the reversible interconversion of serine and glycine with tetrahydrofolate (THF) serving as the one-carbon carrier. This reaction serves as the major source of one-carbon groups required for the biosynthesis of purines, thymidylate, methionine, and other important biomolecules. Also exhibits THF-independent aldolase activity toward beta-hydroxyamino acids, producing glycine and aldehydes, via a retro-aldol mechanism. This chain is Serine hydroxymethyltransferase, found in Methylorubrum populi (strain ATCC BAA-705 / NCIMB 13946 / BJ001) (Methylobacterium populi).